Reading from the N-terminus, the 491-residue chain is Cytochrome P450 monooxygenase 521A1 (491 aa).

A helical transmembrane segment spans residues 1-21 (MILLTLLYLIIFYIIIDFIKK). Cys438 serves as a coordination point for heme.

Belongs to the cytochrome P450 family. The cofactor is heme.

The protein resides in the membrane. It catalyses the reaction discoidol + reduced [NADPH--hemoprotein reductase] + O2 = discodiene + acetone + oxidized [NADPH--hemoprotein reductase] + 2 H2O + H(+). It functions in the pathway sesquiterpene biosynthesis. Its function is as follows. Cytochrome P450 monooxygenase; part of the gene cluster that mediates the biosynthesis of the trisnorsesquiterpene discodiene which has a function during later stages of multicellular development, during the transition from fingers to Mexican hats. The terpene synthase tps8 converts its substrate farnesyl diphosphate (FDP) into the bicyclic sesquiterpene alcohol discoidol. The cytochrome P450 monooxygenase cyp521A1 then catalyzes the oxidative degradation of discoidol to form the trisnorsesquiterpene discodiene. The sequence is that of Cytochrome P450 monooxygenase 521A1 (cyp521A1) from Dictyostelium discoideum (Social amoeba).